The following is a 592-amino-acid chain: Colicin-A (592 aa).

2 stretches are compositionally biased toward gly residues: residues 1–13 (MPGF…GDGT) and 23–34 (PEPGGGSHGNSG). Disordered regions lie at residues 1–57 (MPGF…PGDS) and 373–395 (RQRQ…KAKD). The next 2 helical transmembrane spans lie at 528–548 (WVLS…TLGA) and 555–575 (VPAI…GALI).

This sequence belongs to the channel forming colicin family.

It localises to the cell membrane. Functionally, this colicin is a channel-forming colicin. This class of transmembrane toxins depolarize the cytoplasmic membrane, leading to dissipation of cellular energy. Colicins are polypeptide toxins produced by and active against E.coli and closely related bacteria. The sequence is that of Colicin-A (caa) from Citrobacter freundii.